The chain runs to 357 residues: Anthranilate phosphoribosyltransferase (357 aa).

Residues Gly94, 97–98 (GD), Thr102, 104–107 (NLST), 122–130 (KHGNRAASS), and Gly134 each bind 5-phospho-alpha-D-ribose 1-diphosphate. Anthranilate is bound at residue Gly94. Mg(2+) is bound at residue Ser106. Anthranilate is bound at residue Asn125. Arg180 contacts anthranilate. Mg(2+) contacts are provided by Asp238 and Glu239.

It belongs to the anthranilate phosphoribosyltransferase family. As to quaternary structure, homodimer. Mg(2+) is required as a cofactor.

The enzyme catalyses N-(5-phospho-beta-D-ribosyl)anthranilate + diphosphate = 5-phospho-alpha-D-ribose 1-diphosphate + anthranilate. It participates in amino-acid biosynthesis; L-tryptophan biosynthesis; L-tryptophan from chorismate: step 2/5. Catalyzes the transfer of the phosphoribosyl group of 5-phosphorylribose-1-pyrophosphate (PRPP) to anthranilate to yield N-(5'-phosphoribosyl)-anthranilate (PRA). The sequence is that of Anthranilate phosphoribosyltransferase from Mycobacterium sp. (strain KMS).